The following is a 676-amino-acid chain: DNA ligase (676 aa).

NAD(+)-binding positions include 35-39, 84-85, and Glu-115; these read DNEYD and SL. Lys-117 (N6-AMP-lysine intermediate) is an active-site residue. NAD(+) is bound by residues Arg-138, Glu-177, Lys-294, and Lys-318. Zn(2+) contacts are provided by Cys-412, Cys-415, Cys-430, and Cys-436. The region spanning 595–676 is the BRCT domain; sequence PTRQPLNGES…FLAFLAQYSA (82 aa).

It belongs to the NAD-dependent DNA ligase family. LigA subfamily. Requires Mg(2+) as cofactor. It depends on Mn(2+) as a cofactor.

The enzyme catalyses NAD(+) + (deoxyribonucleotide)n-3'-hydroxyl + 5'-phospho-(deoxyribonucleotide)m = (deoxyribonucleotide)n+m + AMP + beta-nicotinamide D-nucleotide.. In terms of biological role, DNA ligase that catalyzes the formation of phosphodiester linkages between 5'-phosphoryl and 3'-hydroxyl groups in double-stranded DNA using NAD as a coenzyme and as the energy source for the reaction. It is essential for DNA replication and repair of damaged DNA. The protein is DNA ligase of Acinetobacter baylyi (strain ATCC 33305 / BD413 / ADP1).